A 730-amino-acid chain; its full sequence is Meiotically up-regulated gene 70 protein (730 aa).

The interval 1-27 (MTVGTLSVVSSTASDTASHVSDTRKRQ) is disordered. Residues 7-20 (SVVSSTASDTASHV) are compositionally biased toward low complexity. 4 CBS domains span residues 69 to 127 (ALDP…LNAR), 135 to 200 (MSTS…RIAR), 263 to 319 (SSEE…GLDP), and 328 to 385 (MTPH…PEEE). The next 2 membrane-spanning stretches (helical) occupy residues 290 to 310 (AVLV…DVVL) and 358 to 378 (VVDE…ATAI). The disordered stretch occupies residues 420–517 (ENYDVNPPLP…ENGSNSFAAS (98 aa)). Composition is skewed to polar residues over residues 458 to 470 (AWQN…NNKP) and 480 to 515 (YNFS…NSFA). Positions 572-649 (PSQFTIKYRS…ARRRGLPRLE (78 aa)) constitute a PB1 domain. The helical transmembrane segment at 706-726 (PIYIGIVSSSIVILAVSMWYL) threads the bilayer.

It is found in the cytoplasm. It localises to the nucleus membrane. Its function is as follows. Has a role in meiosis. In Schizosaccharomyces pombe (strain 972 / ATCC 24843) (Fission yeast), this protein is Meiotically up-regulated gene 70 protein (mug70).